The primary structure comprises 495 residues: Putative aldehyde dehydrogenase AldA (495 aa).

NAD(+) is bound at residue 212 to 218 (GKGSESG). Active-site residues include Glu256 and Cys290.

Belongs to the aldehyde dehydrogenase family.

It carries out the reaction an aldehyde + NAD(+) + H2O = a carboxylate + NADH + 2 H(+). The sequence is that of Putative aldehyde dehydrogenase AldA (aldA) from Staphylococcus aureus (strain Mu50 / ATCC 700699).